A 348-amino-acid chain; its full sequence is Protein pelota homolog (348 aa).

The protein belongs to the eukaryotic release factor 1 family. Pelota subfamily. In terms of assembly, monomer. A divalent metal cation is required as a cofactor.

The protein resides in the cytoplasm. May function in recognizing stalled ribosomes, interact with stem-loop structures in stalled mRNA molecules, and effect endonucleolytic cleavage of the mRNA. May play a role in the release non-functional ribosomes and degradation of damaged mRNAs. Has endoribonuclease activity. The chain is Protein pelota homolog from Methanococcus vannielii (strain ATCC 35089 / DSM 1224 / JCM 13029 / OCM 148 / SB).